Here is a 175-residue protein sequence, read N- to C-terminus: General stress protein 14 (175 aa).

This sequence belongs to the NAD(P)H dehydrogenase (quinone) family.

This Bacillus subtilis (strain 168) protein is General stress protein 14 (ywrO).